Reading from the N-terminus, the 897-residue chain is Autophagy-related protein 9 (897 aa).

Residues 1–256 (MEQSEDTIQH…DVYSYYLGNG (256 aa)) are Cytoplasmic-facing. Disordered regions lie at residues 46-106 (RSGS…QELE), 112-131 (TIAK…QADS), and 195-224 (ENQL…RPSP). The span at 80 to 93 (ENMTSYNGAQGSGS) shows a compositional bias: polar residues. Low complexity predominate over residues 214-224 (ARLSSPSRPSP). A helical transmembrane segment spans residues 257 to 277 (FYCIMIEKILNLLTLLFIVFI). Residues 278-314 (STYMSHCIDYSKLPNGHKFSDVRVDQCYETQITGTTK) are Lumenal-facing. A helical membrane pass occupies residues 315 to 335 (LLFWIFGVFVVLKVVQMYFDF). Over 336-431 (RRIHEIHNFY…PLYRTSTLTK (96 aa)) the chain is Cytoplasmic. An intramembrane segment occupies 432–452 (TLEWNIHLCIIGFAFNEAGFL). The Cytoplasmic portion of the chain corresponds to 453–472 (KQSFLNPAQREFLSEELKKR). A helical membrane pass occupies residues 473–493 (FILAGFLNIILAPFLVVYFVL). Residues 494–558 (LYFFRYFNEY…NQFPNALGDY (65 aa)) lie on the Lumenal side of the membrane. Residues 559–579 (FFKFVKFISGSFVAILALMTV) form a helical membrane-spanning segment. Residues 580-661 (LDPENFLNFE…QEFCKLYNLR (82 aa)) lie on the Cytoplasmic side of the membrane. An intramembrane segment occupies 662 to 682 (VILLLRELASLIMTPFILWFS). The Cytoplasmic portion of the chain corresponds to 683–897 (LPNSAESIVD…QYYRKSDVGR (215 aa)).

It belongs to the ATG9 family. As to quaternary structure, homotrimer; forms a homotrimer with a central pore that forms a path between the two membrane leaflets. Post-translationally, phosphorylated by ATG1. ATG1 phosphorylation is required for preautophagosome elongation.

The protein resides in the preautophagosomal structure membrane. It localises to the cytoplasmic vesicle membrane. The protein localises to the golgi apparatus membrane. Its subcellular location is the endoplasmic reticulum membrane. The enzyme catalyses a 1,2-diacyl-sn-glycero-3-phosphocholine(in) = a 1,2-diacyl-sn-glycero-3-phosphocholine(out). The catalysed reaction is a 1,2-diacyl-sn-glycero-3-phospho-L-serine(in) = a 1,2-diacyl-sn-glycero-3-phospho-L-serine(out). It carries out the reaction a 1,2-diacyl-sn-glycero-3-phosphoethanolamine(in) = a 1,2-diacyl-sn-glycero-3-phosphoethanolamine(out). It catalyses the reaction a 1,2-diacyl-sn-glycero-3-phospho-(1D-myo-inositol-3-phosphate)(in) = a 1,2-diacyl-sn-glycero-3-phospho-(1D-myo-inositol-3-phosphate)(out). Phospholipid scramblase involved in autophagy and cytoplasm to vacuole transport (Cvt) vesicle formation. Cycles between the preautophagosomal structure/phagophore assembly site (PAS) and the cytoplasmic vesicle pool and supplies membrane for the growing autophagosome. Lipid scramblase activity plays a key role in preautophagosomal structure/phagophore assembly by distributing the phospholipids that arrive through ATG2 from the cytoplasmic to the luminal leaflet of the bilayer, thereby driving autophagosomal membrane expansion. Required for mitophagy. Also involved in endoplasmic reticulum-specific autophagic process and is essential for the survival of cells subjected to severe ER stress. Different machineries are required for anterograde trafficking to the PAS during either the Cvt pathway or bulk autophagy and for retrograde trafficking. The protein is Autophagy-related protein 9 (ATG9) of Eremothecium gossypii (strain ATCC 10895 / CBS 109.51 / FGSC 9923 / NRRL Y-1056) (Yeast).